The chain runs to 155 residues: Small ribosomal subunit protein uS7 (155 aa).

This sequence belongs to the universal ribosomal protein uS7 family. In terms of assembly, part of the 30S ribosomal subunit. Contacts proteins S9 and S11.

One of the primary rRNA binding proteins, it binds directly to 16S rRNA where it nucleates assembly of the head domain of the 30S subunit. Is located at the subunit interface close to the decoding center, probably blocks exit of the E-site tRNA. The protein is Small ribosomal subunit protein uS7 of Kosmotoga olearia (strain ATCC BAA-1733 / DSM 21960 / TBF 19.5.1).